Reading from the N-terminus, the 102-residue chain is Large ribosomal subunit protein bL21 (102 aa).

This sequence belongs to the bacterial ribosomal protein bL21 family. As to quaternary structure, part of the 50S ribosomal subunit. Contacts protein L20.

Functionally, this protein binds to 23S rRNA in the presence of protein L20. This is Large ribosomal subunit protein bL21 from Bacillus subtilis (strain 168).